The primary structure comprises 363 residues: S-adenosylmethionine:tRNA ribosyltransferase-isomerase (363 aa).

The protein belongs to the QueA family. In terms of assembly, monomer.

Its subcellular location is the cytoplasm. It catalyses the reaction 7-aminomethyl-7-carbaguanosine(34) in tRNA + S-adenosyl-L-methionine = epoxyqueuosine(34) in tRNA + adenine + L-methionine + 2 H(+). It functions in the pathway tRNA modification; tRNA-queuosine biosynthesis. Its function is as follows. Transfers and isomerizes the ribose moiety from AdoMet to the 7-aminomethyl group of 7-deazaguanine (preQ1-tRNA) to give epoxyqueuosine (oQ-tRNA). This Synechococcus sp. (strain RCC307) protein is S-adenosylmethionine:tRNA ribosyltransferase-isomerase.